The primary structure comprises 529 residues: Inosine-5'-monophosphate dehydrogenase (529 aa).

CBS domains lie at 129 to 185 (MVTD…SKQV) and 189 to 246 (MTKT…PLAT). Residues aspartate 283 and 334-336 (GVG) each bind NAD(+). 2 residues coordinate K(+): glycine 336 and glycine 338. Serine 339 lines the IMP pocket. Cysteine 341 provides a ligand contact to K(+). Catalysis depends on cysteine 341, which acts as the Thioimidate intermediate. Residues 374 to 376 (DGG), 397 to 398 (GS), and 421 to 425 (YRGMG) contribute to the IMP site. The Proton acceptor role is filled by arginine 443. Glutamate 458 provides a ligand contact to IMP. Residues glutamate 511, serine 512, and histidine 513 each contribute to the K(+) site.

This sequence belongs to the IMPDH/GMPR family. In terms of assembly, homotetramer. K(+) serves as cofactor.

The catalysed reaction is IMP + NAD(+) + H2O = XMP + NADH + H(+). Its pathway is purine metabolism; XMP biosynthesis via de novo pathway; XMP from IMP: step 1/1. With respect to regulation, mycophenolic acid (MPA) is a non-competitive inhibitor that prevents formation of the closed enzyme conformation by binding to the same site as the amobile flap. In contrast, mizoribine monophosphate (MZP) is a competitive inhibitor that induces the closed conformation. MPA is a potent inhibitor of mammalian IMPDHs but a poor inhibitor of the bacterial enzymes. MZP is a more potent inhibitor of bacterial IMPDH. Its function is as follows. Catalyzes the conversion of inosine 5'-phosphate (IMP) to xanthosine 5'-phosphate (XMP), the first committed and rate-limiting step in the de novo synthesis of guanine nucleotides, and therefore plays an important role in the regulation of cell growth. In Mycobacterium leprae (strain TN), this protein is Inosine-5'-monophosphate dehydrogenase.